A 499-amino-acid polypeptide reads, in one-letter code: Bifunctional purine biosynthesis protein PurH (499 aa).

Residues 1 to 144 (MIKRALISVF…KNFKDVVVLT (144 aa)) enclose the MGS-like domain.

The protein belongs to the PurH family.

It carries out the reaction (6R)-10-formyltetrahydrofolate + 5-amino-1-(5-phospho-beta-D-ribosyl)imidazole-4-carboxamide = 5-formamido-1-(5-phospho-D-ribosyl)imidazole-4-carboxamide + (6S)-5,6,7,8-tetrahydrofolate. The catalysed reaction is IMP + H2O = 5-formamido-1-(5-phospho-D-ribosyl)imidazole-4-carboxamide. Its pathway is purine metabolism; IMP biosynthesis via de novo pathway; 5-formamido-1-(5-phospho-D-ribosyl)imidazole-4-carboxamide from 5-amino-1-(5-phospho-D-ribosyl)imidazole-4-carboxamide (10-formyl THF route): step 1/1. The protein operates within purine metabolism; IMP biosynthesis via de novo pathway; IMP from 5-formamido-1-(5-phospho-D-ribosyl)imidazole-4-carboxamide: step 1/1. The protein is Bifunctional purine biosynthesis protein PurH of Clostridium botulinum (strain Loch Maree / Type A3).